The following is an 88-amino-acid chain: Small ribosomal subunit protein bS20 (88 aa).

2 disordered regions span residues 1–22 (MPNI…AQNA) and 69–88 (KNAA…GLSA).

This sequence belongs to the bacterial ribosomal protein bS20 family.

Binds directly to 16S ribosomal RNA. The protein is Small ribosomal subunit protein bS20 of Shouchella clausii (strain KSM-K16) (Alkalihalobacillus clausii).